A 158-amino-acid polypeptide reads, in one-letter code: Protein-export protein SecB (158 aa).

Belongs to the SecB family. As to quaternary structure, homotetramer, a dimer of dimers. One homotetramer interacts with 1 SecA dimer.

It localises to the cytoplasm. In terms of biological role, one of the proteins required for the normal export of preproteins out of the cell cytoplasm. It is a molecular chaperone that binds to a subset of precursor proteins, maintaining them in a translocation-competent state. It also specifically binds to its receptor SecA. This Bartonella quintana (strain Toulouse) (Rochalimaea quintana) protein is Protein-export protein SecB.